The chain runs to 226 residues: Acyl-protein thioesterase 1 homolog 1 (226 aa).

Active-site charge relay system residues include S121, D174, and H206.

It belongs to the AB hydrolase superfamily. AB hydrolase 2 family.

It is found in the cytoplasm. Its subcellular location is the nucleus. The catalysed reaction is S-hexadecanoyl-L-cysteinyl-[protein] + H2O = L-cysteinyl-[protein] + hexadecanoate + H(+). Hydrolyzes fatty acids from S-acylated cysteine residues in proteins with a strong preference for palmitoylated G-alpha proteins over other acyl substrates. Mediates the deacylation of G-alpha proteins such as GPA1 in vivo, but has weak or no activity toward palmitoylated Ras proteins. Has weak lysophospholipase activity in vitro; however such activity may not exist in vivo. The sequence is that of Acyl-protein thioesterase 1 homolog 1 from Dictyostelium discoideum (Social amoeba).